A 187-amino-acid chain; its full sequence is Protein TfaD (187 aa).

It in the C-terminal section; belongs to the tfa family.

In Escherichia coli (strain K12), this protein is Protein TfaD (tfaD).